The sequence spans 341 residues: tRNA N6-adenosine threonylcarbamoyltransferase (341 aa).

Fe cation is bound by residues H111 and H115. Substrate is bound by residues 134-138 (LVSGG), D167, G180, and N276. Residue D304 coordinates Fe cation.

The protein belongs to the KAE1 / TsaD family. The cofactor is Fe(2+).

It is found in the cytoplasm. The catalysed reaction is L-threonylcarbamoyladenylate + adenosine(37) in tRNA = N(6)-L-threonylcarbamoyladenosine(37) in tRNA + AMP + H(+). In terms of biological role, required for the formation of a threonylcarbamoyl group on adenosine at position 37 (t(6)A37) in tRNAs that read codons beginning with adenine. Is involved in the transfer of the threonylcarbamoyl moiety of threonylcarbamoyl-AMP (TC-AMP) to the N6 group of A37, together with TsaE and TsaB. TsaD likely plays a direct catalytic role in this reaction. The polypeptide is tRNA N6-adenosine threonylcarbamoyltransferase (Stutzerimonas stutzeri (strain A1501) (Pseudomonas stutzeri)).